Consider the following 562-residue polypeptide: MSKDAGGGQMNSNLKTSLSECMEALDLFLSNNFQEALDQLRAKSKDSMYHALTYATMLEMQAMMTFDPQDILNAGNTMKEAQAVCQRYRRKSTVVDSFNSLVHKQSLDQFTEEEIHAEVCYAECLLQRAALTFLQDENMVSFIKGGIKVRNSYQTYKELHSLQQCANYAKGESHCHFEGGVKLGVGAFNLTISMLPTRILRLLEFVGFSGNKDYGLSQLQEGTTVHSFRALLCTLLLLCYHTFLRFVLGTGSGNIEEAEKLLEPYLKRYPKGAIFLFFAGRIEEIKGNIDEAISRFEECCESQQNWKQFHHMCYWQLMWCFTYKQHWKMAYFYADLLSKENSWSKATYMYMKAAYLSMFAEDDCKPFGDDEVQIFRLVPSLKLKIAGKSLPTEKFAIRKSRRYLAQKLVPLPVPPLEMMYIWNGYAVIGKHQDLTEAMLQTLVRAEKSLEGVTASEFLIDDRCVVKLLKGLCYKYLGRIPEAVESFSYIQLNEKRIKYDHYLVPNAMLELALLYLQLEKKEEALRLLENAKNNYKNYSMESRTHFRIQDALQQAKSLPQNGC.

TPR repeat units lie at residues 273-306 (AIFL…QQNW), 463-496 (CVVK…EKRI), and 504-537 (PNAM…YKNY).

Belongs to the TTC39 family.

In Xenopus tropicalis (Western clawed frog), this protein is Tetratricopeptide repeat protein 39A (ttc39a).